The following is a 410-amino-acid chain: Pyrophosphate--fructose 6-phosphate 1-phosphotransferase (410 aa).

Gly-12 contributes to the diphosphate binding site. Mg(2+) is bound at residue Asp-121. Residues 149-151 (TID), 194-196 (MGR), Glu-266, and 323-326 (YFSR) each bind substrate. The active-site Proton acceptor is Asp-151.

The protein belongs to the phosphofructokinase type A (PFKA) family. PPi-dependent PFK group II subfamily. Clade 'P' sub-subfamily. Homodimer or homotetramer. The cofactor is Mg(2+).

The protein localises to the cytoplasm. It catalyses the reaction beta-D-fructose 6-phosphate + diphosphate = beta-D-fructose 1,6-bisphosphate + phosphate + H(+). The protein operates within carbohydrate degradation; glycolysis; D-glyceraldehyde 3-phosphate and glycerone phosphate from D-glucose: step 3/4. With respect to regulation, non-allosteric. Functionally, catalyzes the phosphorylation of D-fructose 6-phosphate, the first committing step of glycolysis. Uses inorganic phosphate (PPi) as phosphoryl donor instead of ATP like common ATP-dependent phosphofructokinases (ATP-PFKs), which renders the reaction reversible, and can thus function both in glycolysis and gluconeogenesis. Consistently, PPi-PFK can replace the enzymes of both the forward (ATP-PFK) and reverse (fructose-bisphosphatase (FBPase)) reactions. In Mastigamoeba balamuthi (Phreatamoeba balamuthi), this protein is Pyrophosphate--fructose 6-phosphate 1-phosphotransferase.